An 87-amino-acid chain; its full sequence is U3-theraphotoxin-Hhn1c (87 aa).

The signal sequence occupies residues 1-24 (MVNMKASMFLTFAGLVLLFVVCHA). The propeptide occupies 25 to 52 (SESEEKEFPKEMLSSIFAVDDDFKQEER). 3 disulfides stabilise this stretch: Cys54–Cys67, Cys61–Cys72, and Cys66–Cys79.

This sequence belongs to the neurotoxin 10 (Hwtx-1) family. 51 (Hntx-8) subfamily. Hntx-8 sub-subfamily. Expressed by the venom gland.

The protein resides in the secreted. In terms of biological role, ion channel inhibitor. This is U3-theraphotoxin-Hhn1c from Cyriopagopus hainanus (Chinese bird spider).